A 397-amino-acid polypeptide reads, in one-letter code: Xylose isomerase (397 aa).

Residues H54 and D57 contribute to the active site. Positions 181, 217, 220, 245, 255, 257, and 293 each coordinate Mg(2+).

The protein belongs to the xylose isomerase family. In terms of assembly, homotetramer. Mg(2+) serves as cofactor.

Its subcellular location is the cytoplasm. The enzyme catalyses alpha-D-xylose = alpha-D-xylulofuranose. This is Xylose isomerase from Clavibacter michiganensis subsp. michiganensis (strain NCPPB 382).